The primary structure comprises 297 residues: Ribosomal RNA small subunit methyltransferase H (297 aa).

S-adenosyl-L-methionine contacts are provided by residues 35–37 (GGH), Asp-55, Phe-82, Asp-100, and Gln-107.

The protein belongs to the methyltransferase superfamily. RsmH family.

It localises to the cytoplasm. The enzyme catalyses cytidine(1402) in 16S rRNA + S-adenosyl-L-methionine = N(4)-methylcytidine(1402) in 16S rRNA + S-adenosyl-L-homocysteine + H(+). Functionally, specifically methylates the N4 position of cytidine in position 1402 (C1402) of 16S rRNA. The sequence is that of Ribosomal RNA small subunit methyltransferase H from Chlamydia caviae (strain ATCC VR-813 / DSM 19441 / 03DC25 / GPIC) (Chlamydophila caviae).